Reading from the N-terminus, the 185-residue chain is Ovomucoid (185 aa).

3 Kazal-like domains span residues 1–63 (VEVD…ECRE), 64–128 (AVPM…ECRK), and 131–185 (AAVS…FGKC). 9 cysteine pairs are disulfide-bonded: Cys-5-Cys-43, Cys-22-Cys-40, Cys-30-Cys-61, Cys-69-Cys-108, Cys-86-Cys-105, Cys-94-Cys-126, Cys-137-Cys-167, Cys-145-Cys-164, and Cys-153-Cys-185. Asn-174 carries N-linked (GlcNAc...) asparagine glycosylation.

Its subcellular location is the secreted. The sequence is that of Ovomucoid from Meleagris gallopavo (Wild turkey).